Reading from the N-terminus, the 156-residue chain is Small ribosomal subunit protein uS7 (156 aa).

The protein belongs to the universal ribosomal protein uS7 family. Part of the 30S ribosomal subunit. Contacts proteins S9 and S11.

In terms of biological role, one of the primary rRNA binding proteins, it binds directly to 16S rRNA where it nucleates assembly of the head domain of the 30S subunit. Is located at the subunit interface close to the decoding center, probably blocks exit of the E-site tRNA. This Clostridium botulinum (strain Okra / Type B1) protein is Small ribosomal subunit protein uS7.